Here is an 843-residue protein sequence, read N- to C-terminus: Glycogen phosphorylase, brain form (843 aa).

Ala-2 is subject to N-acetylalanine. Ser-15 bears the Phosphoserine; by PHK; in form phosphorylase A mark. Residues Asp-43, Tyr-197, and Arg-310 each contribute to the AMP site. Tyr-197 is subject to Phosphotyrosine. A Phosphotyrosine modification is found at Tyr-473. Pyridoxal 5'-phosphate is bound at residue Lys-569. Residues 677–678 form a pyridoxal 5'-phosphate region; sequence TG. Lys-681 is modified (N6-(pyridoxal phosphate)lysine).

It belongs to the glycogen phosphorylase family. As to quaternary structure, homodimer. Dimers associate into a tetramer to form the enzymatically active phosphorylase A. Requires pyridoxal 5'-phosphate as cofactor. In terms of processing, phosphorylation of Ser-15 converts phosphorylase B (unphosphorylated) to phosphorylase A.

It carries out the reaction [(1-&gt;4)-alpha-D-glucosyl](n) + phosphate = [(1-&gt;4)-alpha-D-glucosyl](n-1) + alpha-D-glucose 1-phosphate. Activity of phosphorylase is controlled both by allosteric means (through the non-covalent binding of metabolites) and by covalent modification. Thus AMP allosterically activates, whereas ATP, ADP, and glucose-6-phosphate allosterically inhibit, phosphorylase B. Glycogen phosphorylase that regulates glycogen mobilization. Phosphorylase is an important allosteric enzyme in carbohydrate metabolism. Enzymes from different sources differ in their regulatory mechanisms and in their natural substrates. However, all known phosphorylases share catalytic and structural properties. The sequence is that of Glycogen phosphorylase, brain form (PYGB) from Ovis aries (Sheep).